A 434-amino-acid chain; its full sequence is Glutamate-1-semialdehyde 2,1-aminomutase 1 (434 aa).

Lys268 bears the N6-(pyridoxal phosphate)lysine mark.

Belongs to the class-III pyridoxal-phosphate-dependent aminotransferase family. HemL subfamily. In terms of assembly, homodimer. Pyridoxal 5'-phosphate is required as a cofactor.

The protein localises to the cytoplasm. The enzyme catalyses (S)-4-amino-5-oxopentanoate = 5-aminolevulinate. Its pathway is porphyrin-containing compound metabolism; protoporphyrin-IX biosynthesis; 5-aminolevulinate from L-glutamyl-tRNA(Glu): step 2/2. The protein is Glutamate-1-semialdehyde 2,1-aminomutase 1 of Shouchella clausii (strain KSM-K16) (Alkalihalobacillus clausii).